The sequence spans 542 residues: MNTLENTFQFLAEVFEANGGCLVTERVSPSLSGASKRKSRPVKRIITEDEVIPEEEVVEEEEEEKVEQPSEEVTCPAMQVDATDAILASLRQIANNDLSEHCIREDEGNTSAEVFSNGNGEDMEQAGLAGTDLLRRVADMLQGNHNGSLNSHFLQQQFAAFKETVDPTPVSTNGNGLLTPITTQLSPLFTSTDAFNSPEKLLQAIMTPSLGFLGANGLGASNSGLLSSPLIAPSPTLLQSLMNTPTQPTASLTPKKAENRPPVVSQTLKASKRRLFDDTSRIEAASMSGDDRIDMNELEAFAQTFKKQRIKFGFTQGDVGVALGKRYGTDFSQTTISRFEALNLSFKNMCKLRPLLKEWLADVEMAIEGGATVTDLIDKKTIHNGNHHTIHHVDIHETSISNSISSVTASSLLSREQHVKRRRKRTNLDMNQRNALDTFFALNPRPDHDKMTDIANSLELDRDVVRVWFCNRRQKMRRVDEPIEGEMVTPSVSPVFPHFSSMSALEQIQEAARLASCQASNDDSDGTSGSPDAPSNDGCSDL.

Positions 243 to 252 are enriched in polar residues; it reads NTPTQPTASL. Positions 243–264 are disordered; it reads NTPTQPTASLTPKKAENRPPVV. A POU-specific domain is found at 290–364; that stretch reads DDRIDMNELE…LLKEWLADVE (75 aa). The segment at residues 421–480 is a DNA-binding region (homeobox); the sequence is RRRKRTNLDMNQRNALDTFFALNPRPDHDKMTDIANSLELDRDVVRVWFCNRRQKMRRVD. Positions 514 to 542 are disordered; sequence LASCQASNDDSDGTSGSPDAPSNDGCSDL. Polar residues predominate over residues 517–530; the sequence is CQASNDDSDGTSGS.

This sequence belongs to the POU transcription factor family. In terms of assembly, interacts with akir-1. Expressed in the gonadal sheath cells that signal the oocyte, but not in the oocyte.

It localises to the nucleus. Directs gonadal sheath cell differentiation and function. Also directs gonad migration and plays a role in specifying the differentiated phenotypes of epidermal cells during postembryonic development. Plays a role in oogenesis, regulating a sheath cell signal that causes oocytes to maintain diakinesis arrest during meiosis. Negatively regulates oocyte maturation, ovulation and MAPK activation in oocytes when sperm are not available for fertilization. May be recruited by akir-1 to the promoter regions of antimicrobial peptide genes to control gene expression in response to fungal infection. The sequence is that of Homeobox protein ceh-18 from Caenorhabditis elegans.